We begin with the raw amino-acid sequence, 356 residues long: Tyrosine recombinase XerS (356 aa).

One can recognise a Core-binding (CB) domain in the interval 16 to 121 (LMPWYVLEYY…ALSSLYKYLT (106 aa)). A Tyr recombinase domain is found at 169-354 (GFLTYIDQEH…VNDEQKNALD (186 aa)). Catalysis depends on residues Arg-210, Lys-234, His-306, Arg-309, and His-332. The active-site O-(3'-phospho-DNA)-tyrosine intermediate is Tyr-341.

Belongs to the 'phage' integrase family. XerS subfamily.

The protein localises to the cytoplasm. Its activity is regulated as follows. FtsK is required for recombination. Functionally, site-specific tyrosine recombinase, which acts by catalyzing the cutting and rejoining of the recombining DNA molecules. Essential to convert dimers of the bacterial chromosome into monomers to permit their segregation at cell division. This Streptococcus pneumoniae (strain P1031) protein is Tyrosine recombinase XerS.